Consider the following 475-residue polypeptide: Aspartyl/glutamyl-tRNA(Asn/Gln) amidotransferase subunit B (475 aa).

The protein belongs to the GatB/GatE family. GatB subfamily. In terms of assembly, heterotrimer of A, B and C subunits.

It carries out the reaction L-glutamyl-tRNA(Gln) + L-glutamine + ATP + H2O = L-glutaminyl-tRNA(Gln) + L-glutamate + ADP + phosphate + H(+). It catalyses the reaction L-aspartyl-tRNA(Asn) + L-glutamine + ATP + H2O = L-asparaginyl-tRNA(Asn) + L-glutamate + ADP + phosphate + 2 H(+). Its function is as follows. Allows the formation of correctly charged Asn-tRNA(Asn) or Gln-tRNA(Gln) through the transamidation of misacylated Asp-tRNA(Asn) or Glu-tRNA(Gln) in organisms which lack either or both of asparaginyl-tRNA or glutaminyl-tRNA synthetases. The reaction takes place in the presence of glutamine and ATP through an activated phospho-Asp-tRNA(Asn) or phospho-Glu-tRNA(Gln). This Staphylococcus aureus (strain bovine RF122 / ET3-1) protein is Aspartyl/glutamyl-tRNA(Asn/Gln) amidotransferase subunit B.